Consider the following 311-residue polypeptide: tRNA dimethylallyltransferase (311 aa).

13–20 serves as a coordination point for ATP; that stretch reads GPTASGKT. Position 15–20 (15–20) interacts with substrate; it reads TASGKT. Interaction with substrate tRNA regions lie at residues 38–41 and 166–170; these read DSMQ and QRGLR.

It belongs to the IPP transferase family. As to quaternary structure, monomer. Mg(2+) serves as cofactor.

It carries out the reaction adenosine(37) in tRNA + dimethylallyl diphosphate = N(6)-dimethylallyladenosine(37) in tRNA + diphosphate. Functionally, catalyzes the transfer of a dimethylallyl group onto the adenine at position 37 in tRNAs that read codons beginning with uridine, leading to the formation of N6-(dimethylallyl)adenosine (i(6)A). This chain is tRNA dimethylallyltransferase, found in Staphylococcus aureus (strain MSSA476).